The following is a 623-amino-acid chain: Quinoprotein ethanol dehydrogenase (623 aa).

The signal sequence occupies residues 1–34; it reads MTIRSLPAALSPLSMAVQAVLLVSSLALAPAANA. Ca(2+) contacts are provided by Asp45 and Asn51. Glu95 is a binding site for pyrroloquinoline quinone. A disulfide bridge connects residues Cys139 and Cys140. Pyrroloquinoline quinone is bound by residues Arg145, Thr189, and 207 to 209; that span reads HGS. Position 213 (Glu213) interacts with Ca(2+). The segment at 242 to 279 is disordered; it reads GRLNGKDSTPTGDVKAPSWPDDPTTETGKVESWSHGGG. 2 residues coordinate Ca(2+): Asn300 and Asp350. Catalysis depends on Asp350, which acts as the Proton acceptor. Arg378 is a pyrroloquinoline quinone binding site. Positions 414-436 are disordered; the sequence is RPVENEGQRPAKPLPGETKGKPV. WD repeat units lie at residues 515–556 and 559–601; these read EHNE…ELWK and TGSG…LTKP. 2 residues coordinate pyrroloquinoline quinone: Trp523 and Ala587.

The protein belongs to the bacterial PQQ dehydrogenase family. Homodimer. Pyrroloquinoline quinone serves as cofactor. The cofactor is Ca(2+).

The protein localises to the periplasm. It catalyses the reaction a primary alcohol + 2 Fe(III)-[cytochrome c] = an aldehyde + 2 Fe(II)-[cytochrome c] + 2 H(+). It carries out the reaction ethanol + 2 Fe(III)-[cytochrome c] = acetaldehyde + 2 Fe(II)-[cytochrome c] + 2 H(+). The catalysed reaction is ethanol + A = acetaldehyde + AH2. The enzyme catalyses 1-propanol + 2 Fe(III)-[cytochrome c] = propanal + 2 Fe(II)-[cytochrome c] + 2 H(+). It functions in the pathway alcohol metabolism; ethanol degradation; acetate from ethanol: step 1/2. Its activity is regulated as follows. Enhanced by the presence of ethylamine or NH4(+) ions. Its function is as follows. Catalyzes the oxidation of ethanol and other primary alcohols to the corresponding aldehydes, except methanol, which is not a substrate. Uses a specific inducible cytochrome c550, encoded by the adjacent gene in the locus, as electron acceptor. Is a key enzyme of the carbon and energy metabolism during growth of P.putida on ethanol as the sole carbon and energy source. Displays lower activity on secondary alcohols, aldehydes and diols. Is not active with sugar alcohols such as glycerol and D-sorbitol. In vitro, reacts well with phenazine methosulfate (PMS) as an electron acceptor but not with NAD(P), potassium ferricyanide, or molecular oxygen. This is Quinoprotein ethanol dehydrogenase from Pseudomonas putida (Arthrobacter siderocapsulatus).